Consider the following 187-residue polypeptide: Superoxide dismutase [Cu-Zn] (187 aa).

The N-terminal stretch at 1 to 23 (MMKMKTLLALAISGICAAGVANA) is a signal peptide. Residues His80, His82, and His105 each contribute to the Cu cation site. A disulfide bridge connects residues Cys87 and Cys183. Zn(2+) contacts are provided by His105, His114, His123, and Asp126. Cu cation is bound at residue His161.

This sequence belongs to the Cu-Zn superoxide dismutase family. Homodimer. Cu cation is required as a cofactor. Zn(2+) serves as cofactor.

It localises to the periplasm. It catalyses the reaction 2 superoxide + 2 H(+) = H2O2 + O2. Functionally, destroys radicals which are normally produced within the cells and which are toxic to biological systems. Its function is as follows. May confer survival advantage by accelerating dismutation of superoxide of environmental origin to hydrogen peroxide, disruptive to the normal mucociliary clearance process in the host. This Haemophilus parainfluenzae protein is Superoxide dismutase [Cu-Zn] (sodC).